A 116-amino-acid chain; its full sequence is Ribonuclease P protein component (116 aa).

It belongs to the RnpA family. As to quaternary structure, consists of a catalytic RNA component (M1 or rnpB) and a protein subunit.

The catalysed reaction is Endonucleolytic cleavage of RNA, removing 5'-extranucleotides from tRNA precursor.. Functionally, RNaseP catalyzes the removal of the 5'-leader sequence from pre-tRNA to produce the mature 5'-terminus. It can also cleave other RNA substrates such as 4.5S RNA. The protein component plays an auxiliary but essential role in vivo by binding to the 5'-leader sequence and broadening the substrate specificity of the ribozyme. This Geobacter sp. (strain M21) protein is Ribonuclease P protein component.